The following is a 105-amino-acid chain: Toxin ParE2 (105 aa).

It belongs to the RelE toxin family.

Its function is as follows. Toxic component of a type II toxin-antitoxin (TA) system. Its toxic effect is neutralized by coexpression with cognate antitoxin ParD2. This is Toxin ParE2 (parE2) from Mycobacterium tuberculosis (strain CDC 1551 / Oshkosh).